The chain runs to 357 residues: Isopentenyl-diphosphate delta-isomerase (357 aa).

Residue 12–13 (RK) participates in substrate binding. FMN contacts are provided by residues Ser70, 71 to 73 (SMT), Ser101, and Asn130. 101 to 103 (SMR) contributes to the substrate binding site. Gln165 contributes to the substrate binding site. Glu166 serves as a coordination point for Mg(2+). FMN is bound by residues Lys197 and 310–311 (AR).

This sequence belongs to the IPP isomerase type 2 family. As to quaternary structure, homooctamer. Dimer of tetramers. FMN serves as cofactor. The cofactor is NADPH. It depends on Mg(2+) as a cofactor.

The protein resides in the cytoplasm. The enzyme catalyses isopentenyl diphosphate = dimethylallyl diphosphate. Its function is as follows. Involved in the biosynthesis of isoprenoids. Catalyzes the 1,3-allylic rearrangement of the homoallylic substrate isopentenyl (IPP) to its allylic isomer, dimethylallyl diphosphate (DMAPP). The chain is Isopentenyl-diphosphate delta-isomerase from Pelodictyon phaeoclathratiforme (strain DSM 5477 / BU-1).